The following is a 194-amino-acid chain: dITP/XTP pyrophosphatase (194 aa).

Residue 8–13 (TSNPGK) coordinates substrate. The Mg(2+) site is built by glutamate 38 and aspartate 67. The Proton acceptor role is filled by aspartate 67. Residues serine 68, 152–155 (FGYD), lysine 175, and 180–181 (HR) contribute to the substrate site.

This sequence belongs to the HAM1 NTPase family. In terms of assembly, homodimer. It depends on Mg(2+) as a cofactor.

The enzyme catalyses XTP + H2O = XMP + diphosphate + H(+). It carries out the reaction dITP + H2O = dIMP + diphosphate + H(+). The catalysed reaction is ITP + H2O = IMP + diphosphate + H(+). Pyrophosphatase that catalyzes the hydrolysis of nucleoside triphosphates to their monophosphate derivatives, with a high preference for the non-canonical purine nucleotides XTP (xanthosine triphosphate), dITP (deoxyinosine triphosphate) and ITP. Seems to function as a house-cleaning enzyme that removes non-canonical purine nucleotides from the nucleotide pool, thus preventing their incorporation into DNA/RNA and avoiding chromosomal lesions. The chain is dITP/XTP pyrophosphatase from Legionella pneumophila (strain Lens).